A 417-amino-acid chain; its full sequence is Serine hydroxymethyltransferase (417 aa).

(6S)-5,6,7,8-tetrahydrofolate-binding positions include leucine 120 and 124 to 126 (GHL). The residue at position 229 (lysine 229) is an N6-(pyridoxal phosphate)lysine. A (6S)-5,6,7,8-tetrahydrofolate-binding site is contributed by 354–356 (SPF).

The protein belongs to the SHMT family. Homodimer. It depends on pyridoxal 5'-phosphate as a cofactor.

It is found in the cytoplasm. It catalyses the reaction (6R)-5,10-methylene-5,6,7,8-tetrahydrofolate + glycine + H2O = (6S)-5,6,7,8-tetrahydrofolate + L-serine. It functions in the pathway one-carbon metabolism; tetrahydrofolate interconversion. Its pathway is amino-acid biosynthesis; glycine biosynthesis; glycine from L-serine: step 1/1. Functionally, catalyzes the reversible interconversion of serine and glycine with tetrahydrofolate (THF) serving as the one-carbon carrier. This reaction serves as the major source of one-carbon groups required for the biosynthesis of purines, thymidylate, methionine, and other important biomolecules. Also exhibits THF-independent aldolase activity toward beta-hydroxyamino acids, producing glycine and aldehydes, via a retro-aldol mechanism. This chain is Serine hydroxymethyltransferase, found in Acinetobacter baylyi (strain ATCC 33305 / BD413 / ADP1).